The sequence spans 254 residues: Hydroxyacylglutathione hydrolase (254 aa).

Zn(2+) is bound by residues histidine 54, histidine 56, aspartate 58, histidine 59, histidine 111, aspartate 130, and histidine 168.

Belongs to the metallo-beta-lactamase superfamily. Glyoxalase II family. In terms of assembly, monomer. It depends on Zn(2+) as a cofactor.

The catalysed reaction is an S-(2-hydroxyacyl)glutathione + H2O = a 2-hydroxy carboxylate + glutathione + H(+). It participates in secondary metabolite metabolism; methylglyoxal degradation; (R)-lactate from methylglyoxal: step 2/2. In terms of biological role, thiolesterase that catalyzes the hydrolysis of S-D-lactoyl-glutathione to form glutathione and D-lactic acid. In Legionella pneumophila (strain Lens), this protein is Hydroxyacylglutathione hydrolase.